We begin with the raw amino-acid sequence, 20 residues long: Putative antimicrobial protein 2 (20 aa).

A disordered region spans residues 1-20 (DLPECCSATELELDSGKQTS).

Its function is as follows. May have antimicrobial activity. This is Putative antimicrobial protein 2 from Cenchritis muricatus (Beaded periwinkle).